A 408-amino-acid polypeptide reads, in one-letter code: AREKVGIIGYTTKETPVLSNPGPYLEFRDEVEELQIHANKLTTLGVNKIIALGHSGFFEDQRIARKVKGVDVVVGGHTNTFLYTGSPPSTEVPAGNYPFMVQSDDGRQVPVVQAYAFGKYLGYLNVVFNDKGNVIKASGNPILLNKDIPEDQVVKAQVNKMKIQLQNYYSQEIGKTIVYLNGTTQACRFHECNLGNLICDAVIYNNLRHPDDNEWNHVSMCIVNGGGIRSPIDERANNGIITLEELTSVLPFGGTFDLLQIKGSALKQAFEHSVHRHGQGTGELLQVSGIKVVYDLSQKPGSRVVSLNVLCTKCRVPTYVPLEMEKTYKVLLPSFLATGGDGYHMLKGDSSNHNSGDLDISIVGDYIKRMEKVFPAVEGRVTFLDGTLFQAQLFLTWGLCISLLFFIL.

Histidine 54 and histidine 77 together coordinate Zn(2+). 2 N-linked (GlcNAc...) asparagine glycosylation sites follow: asparagine 167 and asparagine 181. Intrachain disulfides connect cysteine 187–cysteine 192 and cysteine 199–cysteine 221. Arginine 188 is a binding site for AMP. AMP-binding residues include asparagine 224, arginine 229, and phenylalanine 252. Cysteine 311 and cysteine 314 are oxidised to a cystine. Residues phenylalanine 335 and aspartate 341 each contribute to the AMP site. Propeptides (removed in mature form) lie at residues 385–388 (DGTL) and 385–408 (DGTL…FFIL).

It belongs to the 5'-nucleotidase family. As to quaternary structure, homodimer. Post-translationally, venom 5'-nucleotidases (or a part thereof) may be released into the venom via exosome-like vesicles. They may be attached via a GPI anchor to the membrane of these vesicles. Soluble forms of 5'-nucleotidase might be released by cleavage of the ectodomain in the exosome-like vesicles or venom gland cells. Expressed by the venom gland.

It is found in the membrane. It catalyses the reaction a ribonucleoside 5'-phosphate + H2O = a ribonucleoside + phosphate. The enzyme catalyses AMP + H2O = adenosine + phosphate. It carries out the reaction GMP + H2O = guanosine + phosphate. The catalysed reaction is ADP + H2O = AMP + phosphate + H(+). Its activity is regulated as follows. Is potently inhibited by metal ions Fe(3+), Cu(2+) and Zn(2+). Is enhanced by Mn(2+). Ca(2+) and Mg(2+) have no effect. Hydrolyzes nucleotides into nucleosides. Prefers AMP as the substrate but also cleaves GMP and ADP. Does not affect AMP, cAMP and cGMP. Inhibits ADP- and collagen-induced platelet aggregation. Snake venom 5'-nucleotidases are widely distributed among venomous snake taxa, but there is a lack of information about their biological activities. They have been shown to inhibit platelet aggregation. This effect may be due to the liberation of inhibitory AMP or adenosine by its action on ADP released upon initiation of aggregation. Venom 5'-nucleotidases are also known to synergistically act in vivo with other toxins like ADPases, phospholipases, and disintegrins to exert a more pronounced anti-coagulant effect. This is Snake venom 5'-nucleotidase from Macrovipera lebetinus (Levantine viper).